The primary structure comprises 144 residues: Large ribosomal subunit protein uL15 (144 aa).

Positions 1-54 are disordered; the sequence is MHLNTLKPAEGAKKLAKRKGRGQGSGNGKMAGRGHKGQKSRSGGMPKIGFEGGQ. Positions 22-31 are enriched in gly residues; sequence GQGSGNGKMA.

This sequence belongs to the universal ribosomal protein uL15 family. Part of the 50S ribosomal subunit.

In terms of biological role, binds to the 23S rRNA. The polypeptide is Large ribosomal subunit protein uL15 (Hydrogenovibrio crunogenus (strain DSM 25203 / XCL-2) (Thiomicrospira crunogena)).